We begin with the raw amino-acid sequence, 367 residues long: Undecaprenyl-phosphate alpha-N-acetylglucosaminyl 1-phosphate transferase (367 aa).

Helical transmembrane passes span 3-23, 45-65, 69-89, 129-149, 158-178, 187-207, 213-233, 242-262, and 318-338; these read LLTA…FIFL, GVIP…MFGL, YIPH…VGAM, WELV…WAAI, IDGL…LILW, MWCF…LGIL, VFMG…LLLE, ISPV…VAIM, and VPEW…GYCI.

Belongs to the glycosyltransferase 4 family. WecA subfamily. Mg(2+) serves as cofactor. It depends on Mn(2+) as a cofactor.

It is found in the cell inner membrane. It carries out the reaction di-trans,octa-cis-undecaprenyl phosphate + UDP-N-acetyl-alpha-D-glucosamine = N-acetyl-alpha-D-glucosaminyl-di-trans,octa-cis-undecaprenyl diphosphate + UMP. Its pathway is bacterial outer membrane biogenesis; LPS O-antigen biosynthesis. It participates in bacterial outer membrane biogenesis; enterobacterial common antigen biosynthesis. Catalyzes the transfer of the GlcNAc-1-phosphate moiety from UDP-GlcNAc onto the carrier lipid undecaprenyl phosphate (C55-P), yielding GlcNAc-pyrophosphoryl-undecaprenyl (GlcNAc-PP-C55). The chain is Undecaprenyl-phosphate alpha-N-acetylglucosaminyl 1-phosphate transferase from Salmonella typhi.